We begin with the raw amino-acid sequence, 423 residues long: Kynureninase (423 aa).

Pyridoxal 5'-phosphate contacts are provided by residues L105, S106, 133 to 136, D218, H221, and Y243; that span reads FPSD. At K244 the chain carries N6-(pyridoxal phosphate)lysine. Residues W273 and N301 each contribute to the pyridoxal 5'-phosphate site.

Belongs to the kynureninase family. As to quaternary structure, homodimer. Pyridoxal 5'-phosphate is required as a cofactor.

The enzyme catalyses L-kynurenine + H2O = anthranilate + L-alanine + H(+). It carries out the reaction 3-hydroxy-L-kynurenine + H2O = 3-hydroxyanthranilate + L-alanine + H(+). It participates in amino-acid degradation; L-kynurenine degradation; L-alanine and anthranilate from L-kynurenine: step 1/1. The protein operates within cofactor biosynthesis; NAD(+) biosynthesis; quinolinate from L-kynurenine: step 2/3. In terms of biological role, catalyzes the cleavage of L-kynurenine (L-Kyn) and L-3-hydroxykynurenine (L-3OHKyn) into anthranilic acid (AA) and 3-hydroxyanthranilic acid (3-OHAA), respectively. The sequence is that of Kynureninase from Xanthomonas oryzae pv. oryzae (strain MAFF 311018).